A 250-amino-acid chain; its full sequence is 2,3-bisphosphoglycerate-dependent phosphoglycerate mutase (250 aa).

Substrate is bound by residues 8-15 (RHGESQWN), 21-22 (TG), Arg-60, 87-90 (ERHY), Lys-98, 114-115 (RR), and 183-184 (GN). His-9 acts as the Tele-phosphohistidine intermediate in catalysis. The active-site Proton donor/acceptor is Glu-87.

The protein belongs to the phosphoglycerate mutase family. BPG-dependent PGAM subfamily. In terms of assembly, homodimer.

The enzyme catalyses (2R)-2-phosphoglycerate = (2R)-3-phosphoglycerate. It functions in the pathway carbohydrate degradation; glycolysis; pyruvate from D-glyceraldehyde 3-phosphate: step 3/5. Functionally, catalyzes the interconversion of 2-phosphoglycerate and 3-phosphoglycerate. This chain is 2,3-bisphosphoglycerate-dependent phosphoglycerate mutase, found in Bordetella pertussis (strain Tohama I / ATCC BAA-589 / NCTC 13251).